The chain runs to 411 residues: Growth-regulating factor 7 (411 aa).

The 36-residue stretch at 38-73 folds into the QLQ domain; sequence PFTPTQWMELEHQALIYKHIVANAPVPAGLLLPIRR. The WRC domain occupies 108-152; sequence DSEPGRCRRTDGKKWRCSRDAVVDQKYCERHINRGRHRSRKHVEG. 2 short sequence motifs (bipartite nuclear localization signal) span residues 113–123 and 141–148; these read RCRRTDGKKWR and RGRHRSRK. A disordered region spans residues 333–369; it reads FFTNTSSASDDKGKSRHPPSLNLLADGHTTSPQLQSP. Over residues 360-369 the composition is skewed to polar residues; sequence HTTSPQLQSP.

The protein belongs to the GRF family.

The protein resides in the nucleus. Transcription activator that plays a regulatory role in gibberellin-induced stem elongation. The chain is Growth-regulating factor 7 (GRF7) from Oryza sativa subsp. japonica (Rice).